A 96-amino-acid polypeptide reads, in one-letter code: Phosphoribosyl-ATP pyrophosphatase (96 aa).

It belongs to the PRA-PH family.

It localises to the cytoplasm. It catalyses the reaction 1-(5-phospho-beta-D-ribosyl)-ATP + H2O = 1-(5-phospho-beta-D-ribosyl)-5'-AMP + diphosphate + H(+). It functions in the pathway amino-acid biosynthesis; L-histidine biosynthesis; L-histidine from 5-phospho-alpha-D-ribose 1-diphosphate: step 2/9. This Methanococcus vannielii (strain ATCC 35089 / DSM 1224 / JCM 13029 / OCM 148 / SB) protein is Phosphoribosyl-ATP pyrophosphatase.